We begin with the raw amino-acid sequence, 326 residues long: Thioredoxin reductase (326 aa).

Position 55–62 (55–62 (EGPEPGGQ)) interacts with FAD. C156 and C159 form a disulfide bridge. 298 to 307 (DVSNKLYAQA) contributes to the FAD binding site.

Belongs to the class-II pyridine nucleotide-disulfide oxidoreductase family. In terms of assembly, homodimer. Requires FAD as cofactor.

Its subcellular location is the cytoplasm. The enzyme catalyses [thioredoxin]-dithiol + NADP(+) = [thioredoxin]-disulfide + NADPH + H(+). This is Thioredoxin reductase (trxB) from Borreliella burgdorferi (strain ATCC 35210 / DSM 4680 / CIP 102532 / B31) (Borrelia burgdorferi).